The sequence spans 552 residues: Formate--tetrahydrofolate ligase (552 aa).

63–70 (TPFGEGKT) contributes to the ATP binding site.

The protein belongs to the formate--tetrahydrofolate ligase family.

It catalyses the reaction (6S)-5,6,7,8-tetrahydrofolate + formate + ATP = (6R)-10-formyltetrahydrofolate + ADP + phosphate. Its pathway is one-carbon metabolism; tetrahydrofolate interconversion. This is Formate--tetrahydrofolate ligase from Caldicellulosiruptor bescii (strain ATCC BAA-1888 / DSM 6725 / KCTC 15123 / Z-1320) (Anaerocellum thermophilum).